A 137-amino-acid polypeptide reads, in one-letter code: 14 kDa proline-rich protein DC2.15 (137 aa).

The N-terminal stretch at 1–25 is a signal peptide; that stretch reads MGSKNSASVALFFTLNILFFALVSS. A disordered region spans residues 30–53; it reads PDPYKPKPKPTPKPTPTPYPSAGK. A compositionally biased stretch (pro residues) spans 38 to 48; that stretch reads KPTPKPTPTPY. A helical membrane pass occupies residues 88–104; that stretch reads LEGLVNLEAAVCLCTAI.

Its subcellular location is the membrane. May be connected with the initiation of embryogenesis or with the metabolic changes produced by the removal of auxins. This is 14 kDa proline-rich protein DC2.15 from Daucus carota (Wild carrot).